We begin with the raw amino-acid sequence, 450 residues long: Tubulin alpha chain (450 aa).

Gln11 provides a ligand contact to GTP. The residue at position 40 (Lys40) is an N6-acetyllysine. The GTP site is built by Glu71, Ser140, Gly144, Thr145, Thr179, Asn206, and Asn228. Glu71 serves as a coordination point for Mg(2+). Glu254 is a catalytic residue.

The protein belongs to the tubulin family. In terms of assembly, dimer of alpha and beta chains. A typical microtubule is a hollow water-filled tube with an outer diameter of 25 nm and an inner diameter of 15 nM. Alpha-beta heterodimers associate head-to-tail to form protofilaments running lengthwise along the microtubule wall with the beta-tubulin subunit facing the microtubule plus end conferring a structural polarity. Microtubules usually have 13 protofilaments but different protofilament numbers can be found in some organisms and specialized cells. Mg(2+) is required as a cofactor. In terms of processing, acetylation of alpha chains at Lys-40 stabilizes microtubules and affects affinity and processivity of microtubule motors. This modification has a role in multiple cellular functions, ranging from cell motility, cell cycle progression or cell differentiation to intracellular trafficking and signaling.

It is found in the cytoplasm. The protein localises to the cytoskeleton. The enzyme catalyses GTP + H2O = GDP + phosphate + H(+). Tubulin is the major constituent of microtubules, a cylinder consisting of laterally associated linear protofilaments composed of alpha- and beta-tubulin heterodimers. Microtubules grow by the addition of GTP-tubulin dimers to the microtubule end, where a stabilizing cap forms. Below the cap, tubulin dimers are in GDP-bound state, owing to GTPase activity of alpha-tubulin. This is Tubulin alpha chain from Euplotoides octocarinatus (Freshwater ciliate).